We begin with the raw amino-acid sequence, 127 residues long: Large ribosomal subunit protein bL17 (127 aa).

The protein belongs to the bacterial ribosomal protein bL17 family. As to quaternary structure, part of the 50S ribosomal subunit. Contacts protein L32.

The sequence is that of Large ribosomal subunit protein bL17 from Chromohalobacter salexigens (strain ATCC BAA-138 / DSM 3043 / CIP 106854 / NCIMB 13768 / 1H11).